We begin with the raw amino-acid sequence, 65 residues long: Conotoxin VnMLCL-041 (65 aa).

The signal sequence occupies residues 1 to 19; it reads MLCLPVFIILLLLASPAAP. Positions 20 to 43 are excised as a propeptide; the sequence is NPLQTRIQSNLIRAGPEDANIKTD. Lysine 64 carries the post-translational modification Lysine amide.

This sequence belongs to the conotoxin T superfamily. Expressed by the venom duct.

Its subcellular location is the secreted. The chain is Conotoxin VnMLCL-041 from Conus ventricosus (Mediterranean cone).